Consider the following 434-residue polypeptide: MSPKRRRLMAAALGACVALVLPLHAGSAQPSTAKTPERTVFEVTASTPEARTRVARTGVDVLGQDGDKLTVVAEPRQQWALRATGLRVENLGDYDAQLQALGKVDFTDPQVGTQDFPSGYTGYHNFQETVTELNQTVTDHPNLVRLSSVGKSYQGRDLWMLKLSDNPAVDENEPEVLFTCNMHAREHLTVEMCLRIIKQYTDGYATNPTIKNLVDSREIWIIPMVNPDGVEYDIATGSFRSWRKNRQPNSTAVGTDPNRNWGYQWGCCGGSSSSGSSETTAARRRSPPRRSPHPHFVNTRVVGGVQQIKTHIDWHTYSELILWPYGYTYNDTAPGLDAQQASAFSTLGRRMASLNGTRRQQSSDLYITDGTINDWLWGVHKIWSYTFEMYPKSSSPGFYPRDTVIATQTQRNDSAVELFLSYSDCVPRIIGRTC.

The N-terminal stretch at 1–33 (MSPKRRRLMAAALGACVALVLPLHAGSAQPSTA) is a signal peptide. The propeptide at 34-114 (KTPERTVFEV…DFTDPQVGTQ (81 aa)) is activation peptide. In terms of domain architecture, Peptidase M14 spans 122 to 423 (GYHNFQETVT…SAVELFLSYS (302 aa)). Residues His-183 and Glu-186 each coordinate Zn(2+). Residues 270–295 (GSSSSGSSETTAARRRSPPRRSPHPH) form a disordered region. Over residues 282-293 (ARRRSPPRRSPH) the composition is skewed to basic residues. His-315 is a binding site for Zn(2+). Glu-388 functions as the Proton donor/acceptor in the catalytic mechanism.

The protein belongs to the peptidase M14 family. Zn(2+) serves as cofactor.

The enzyme catalyses Releases a C-terminal residue, which may be hydrophobic or positively charged.. Its function is as follows. Carboxypeptidase that possesses the specificities of both mammalian Cpase A and B. Thus shows broad substrate specificity, being able to cleave Cbz-Gly-Leu, Cbz-Gly-Val, Cbz-Gly-Phe, Cbz-Gly-Lys and Bz-Gly-Arg in vitro. The sequence is that of Zinc carboxypeptidase from Saccharothrix mutabilis subsp. capreolus (Streptomyces capreolus).